The chain runs to 270 residues: tRNA pseudouridine synthase A (270 aa).

Aspartate 60 serves as the catalytic Nucleophile. The tract at residues 107 to 111 (FHARF) is RNA binding. Tyrosine 118 is a binding site for substrate. An interaction with tRNA region spans residues 168–172 (QCQSR).

Belongs to the tRNA pseudouridine synthase TruA family. Homodimer.

It catalyses the reaction uridine(38/39/40) in tRNA = pseudouridine(38/39/40) in tRNA. Its function is as follows. Formation of pseudouridine at positions 38, 39 and 40 in the anticodon stem and loop of transfer RNAs. This Escherichia coli O139:H28 (strain E24377A / ETEC) protein is tRNA pseudouridine synthase A.